The following is a 503-amino-acid chain: ATP synthase subunit alpha (503 aa).

170-177 (GDRKTGKT) contacts ATP.

It belongs to the ATPase alpha/beta chains family. F-type ATPases have 2 components, CF(1) - the catalytic core - and CF(0) - the membrane proton channel. CF(1) has five subunits: alpha(3), beta(3), gamma(1), delta(1), epsilon(1). CF(0) has four main subunits: a, b, b' and c.

The protein resides in the cellular thylakoid membrane. The catalysed reaction is ATP + H2O + 4 H(+)(in) = ADP + phosphate + 5 H(+)(out). Its function is as follows. Produces ATP from ADP in the presence of a proton gradient across the membrane. The alpha chain is a regulatory subunit. The sequence is that of ATP synthase subunit alpha from Gloeothece citriformis (strain PCC 7424) (Cyanothece sp. (strain PCC 7424)).